A 526-amino-acid chain; its full sequence is Light-independent protochlorophyllide reductase subunit B (526 aa).

Aspartate 36 is a binding site for [4Fe-4S] cluster. Aspartate 284 acts as the Proton donor in catalysis. Glycine 419–leucine 420 contacts substrate.

It belongs to the ChlB/BchB/BchZ family. As to quaternary structure, protochlorophyllide reductase is composed of three subunits; BchL, BchN and BchB. Forms a heterotetramer of two BchB and two BchN subunits. [4Fe-4S] cluster serves as cofactor.

It catalyses the reaction chlorophyllide a + oxidized 2[4Fe-4S]-[ferredoxin] + 2 ADP + 2 phosphate = protochlorophyllide a + reduced 2[4Fe-4S]-[ferredoxin] + 2 ATP + 2 H2O. Its pathway is porphyrin-containing compound metabolism; bacteriochlorophyll biosynthesis (light-independent). Its function is as follows. Component of the dark-operative protochlorophyllide reductase (DPOR) that uses Mg-ATP and reduced ferredoxin to reduce ring D of protochlorophyllide (Pchlide) to form chlorophyllide a (Chlide). This reaction is light-independent. The NB-protein (BchN-BchB) is the catalytic component of the complex. This chain is Light-independent protochlorophyllide reductase subunit B, found in Halorhodospira halophila (strain DSM 244 / SL1) (Ectothiorhodospira halophila (strain DSM 244 / SL1)).